Consider the following 225-residue polypeptide: MTILLVTGTSTGVGKTVATAALAAAAVRQGIDVTVCKPVQTGDDHDAGEVARLSGVTRVQTLVRYPEPLAPVASASRAGLELLDHTQMATAIVALDRPGALTLVEGAGGLLVELAADGKTLRDLAMVLDAPVLVVTTADLGTLNHTALTLEALAVQSVPCAGLVVGSFPAEPDLAQRLNRENLANQFGTPVRAVIPEGAARLMPPVFAELSIELFEPQWVAGLVA.

Position 12–17 (12–17 (GVGKTV)) interacts with ATP. A Mg(2+)-binding site is contributed by threonine 16. Residue lysine 37 is part of the active site. Threonine 41 lines the substrate pocket. Residues aspartate 46, 105–108 (EGAG), 166–167 (GS), and 196–198 (PEG) contribute to the ATP site. Residues aspartate 46 and glutamate 105 each contribute to the Mg(2+) site.

The protein belongs to the dethiobiotin synthetase family. As to quaternary structure, homodimer. Requires Mg(2+) as cofactor.

It localises to the cytoplasm. It carries out the reaction (7R,8S)-7,8-diammoniononanoate + CO2 + ATP = (4R,5S)-dethiobiotin + ADP + phosphate + 3 H(+). It participates in cofactor biosynthesis; biotin biosynthesis; biotin from 7,8-diaminononanoate: step 1/2. Functionally, catalyzes a mechanistically unusual reaction, the ATP-dependent insertion of CO2 between the N7 and N8 nitrogen atoms of 7,8-diaminopelargonic acid (DAPA, also called 7,8-diammoniononanoate) to form a ureido ring. This chain is ATP-dependent dethiobiotin synthetase BioD, found in Mycobacteroides abscessus (strain ATCC 19977 / DSM 44196 / CCUG 20993 / CIP 104536 / JCM 13569 / NCTC 13031 / TMC 1543 / L948) (Mycobacterium abscessus).